Reading from the N-terminus, the 384-residue chain is tRNA-specific 2-thiouridylase MnmA (384 aa).

ATP is bound by residues 9 to 16 (GMSGGVDS) and Met35. Positions 95 to 97 (NPD) are interaction with target base in tRNA. Cys100 functions as the Nucleophile in the catalytic mechanism. A disulfide bridge connects residues Cys100 and Cys196. Gly124 is an ATP binding site. The interaction with tRNA stretch occupies residues 146-148 (KDQ). Cys196 (cysteine persulfide intermediate) is an active-site residue. The interaction with tRNA stretch occupies residues 308 to 309 (RY).

It belongs to the MnmA/TRMU family.

It localises to the cytoplasm. It catalyses the reaction S-sulfanyl-L-cysteinyl-[protein] + uridine(34) in tRNA + AH2 + ATP = 2-thiouridine(34) in tRNA + L-cysteinyl-[protein] + A + AMP + diphosphate + H(+). In terms of biological role, catalyzes the 2-thiolation of uridine at the wobble position (U34) of tRNA, leading to the formation of s(2)U34. The protein is tRNA-specific 2-thiouridylase MnmA of Paraburkholderia phymatum (strain DSM 17167 / CIP 108236 / LMG 21445 / STM815) (Burkholderia phymatum).